The chain runs to 355 residues: Glucokinase (355 aa).

Residue 11 to 16 (GDIGGT) participates in ATP binding.

This sequence belongs to the bacterial glucokinase family.

The protein resides in the cytoplasm. It catalyses the reaction D-glucose + ATP = D-glucose 6-phosphate + ADP + H(+). This is Glucokinase from Synechocystis sp. (strain ATCC 27184 / PCC 6803 / Kazusa).